The chain runs to 123 residues: Small ribosomal subunit protein uS13 (123 aa).

The tract at residues 93-123 (HRKGLPVRGQNTKNNARTRKGPAKAIAGKKK) is disordered. The segment covering 108–123 (ARTRKGPAKAIAGKKK) has biased composition (basic residues).

This sequence belongs to the universal ribosomal protein uS13 family. As to quaternary structure, part of the 30S ribosomal subunit. Forms a loose heterodimer with protein S19. Forms two bridges to the 50S subunit in the 70S ribosome.

Its function is as follows. Located at the top of the head of the 30S subunit, it contacts several helices of the 16S rRNA. In the 70S ribosome it contacts the 23S rRNA (bridge B1a) and protein L5 of the 50S subunit (bridge B1b), connecting the 2 subunits; these bridges are implicated in subunit movement. Contacts the tRNAs in the A and P-sites. The polypeptide is Small ribosomal subunit protein uS13 (Leuconostoc mesenteroides subsp. mesenteroides (strain ATCC 8293 / DSM 20343 / BCRC 11652 / CCM 1803 / JCM 6124 / NCDO 523 / NBRC 100496 / NCIMB 8023 / NCTC 12954 / NRRL B-1118 / 37Y)).